The primary structure comprises 452 residues: UDP-glycosyltransferase 76E4 (452 aa).

Residues Thr274, 333–335 (APQ), 350–358 (HCGWNSTLE), and 372–375 (QGEQ) contribute to the UDP-alpha-D-glucose site.

Belongs to the UDP-glycosyltransferase family.

This chain is UDP-glycosyltransferase 76E4 (UGT76E4), found in Arabidopsis thaliana (Mouse-ear cress).